A 367-amino-acid polypeptide reads, in one-letter code: Isocitrate dehydrogenase [NAD] regulatory subunit 2, mitochondrial (367 aa).

A mitochondrion-targeting transit peptide spans 1–25; sequence MSRQSFSLLKNLRSIASGSKIQTRS.

It belongs to the isocitrate and isopropylmalate dehydrogenases family. In terms of assembly, heterooligomer of catalytic and regulatory subunits. As to expression, ubiquitous. Predominantly expressed in roots, stems and leaves.

The protein resides in the mitochondrion. Its function is as follows. Performs an essential role in the oxidative function of the citric acid cycle. This Arabidopsis thaliana (Mouse-ear cress) protein is Isocitrate dehydrogenase [NAD] regulatory subunit 2, mitochondrial (IDH2).